We begin with the raw amino-acid sequence, 320 residues long: MCGQHYTSIISSITTEASFERVRTHEFIKFSKHKRFDQRHRSMMGQYHSGGEIVSPGTSPFDVLPEDCISNIISFTSPRDACVAASVSKTFESAVSSDCVWDKFLPPEYESLVSRSRVFASKKELYFALCHNPVLIEDGKKSFWLEKASGKRCIMLSSKELWITWGSSPEYWQWISIPESRFNKIAELLDVCWFEIRGKTSARVLSPGTRYSAYIVFKTKDRCPGLGHLPVEVGLGLVGQESSKRFIYFIGPRDRRGRRETRDVTKPDQREDGWMEAELGEFFNEERCDEIEFSVIEIKSPSWKSGLIIQGIEFRPTKSQ.

In terms of domain architecture, F-box spans 58 to 104 (TSPFDVLPEDCISNIISFTSPRDACVAASVSKTFESAVSSDCVWDKF).

In Arabidopsis thaliana (Mouse-ear cress), this protein is F-box protein At2g02240.